The chain runs to 77 residues: U8-lycotoxin-Ls1h (77 aa).

The signal sequence occupies residues 1-20; the sequence is MKLIIFTGLVLFAIVSLIEV. The propeptide occupies 21–26; that stretch reads QADNER.

The protein belongs to the neurotoxin 19 (CSTX) family. 08 (U8-Lctx) subfamily. Post-translationally, contains 4 disulfide bonds. Expressed by the venom gland.

Its subcellular location is the secreted. This is U8-lycotoxin-Ls1h from Lycosa singoriensis (Wolf spider).